The primary structure comprises 433 residues: Homogentisate 1,2-dioxygenase (433 aa).

H288 functions as the Proton acceptor in the catalytic mechanism. Residues H331 and E337 each coordinate Fe cation. Positions 346 and 367 each coordinate homogentisate. Position 367 (H367) interacts with Fe cation.

This sequence belongs to the homogentisate dioxygenase family. As to quaternary structure, hexamer; dimer of trimers. Fe cation is required as a cofactor.

The catalysed reaction is homogentisate + O2 = 4-maleylacetoacetate + H(+). The protein operates within amino-acid degradation; L-phenylalanine degradation; acetoacetate and fumarate from L-phenylalanine: step 4/6. Functionally, involved in the catabolism of homogentisate (2,5-dihydroxyphenylacetate or 2,5-OH-PhAc), a central intermediate in the degradation of phenylalanine and tyrosine. Catalyzes the oxidative ring cleavage of the aromatic ring of homogentisate to yield maleylacetoacetate. The chain is Homogentisate 1,2-dioxygenase from Pseudomonas entomophila (strain L48).